The chain runs to 126 residues: RxLR effector protein BLR31 (126 aa).

Residues 1–22 (MLLSRAISVLALLACIRCGVHA) form the signal peptide. Residues 44–58 (RLLRTSVDFKDSEER) carry the RxLR-dEER motif.

This sequence belongs to the RxLR effector family.

The protein localises to the secreted. The protein resides in the host cell. Its function is as follows. Secreted effector that triggers a hypersensitive response (HR) in 3 Lactuca saligna accessions (CGN05947, CGN05310, CGN05304). In Bremia lactucae (Lettuce downy mildew), this protein is RxLR effector protein BLR31.